The following is a 655-amino-acid chain: MCKSRLPTVLSLTLIYISISIGFSVYFYVLMEAAYDQFSSMFESYTQTAVHLQSNSRTLKSDLSDYMQLLNYSRKFDESGEESVLRRHNITTPRVFYIDLNYTTALGAENRNLNMINFYAIPYRYVDLLDPFGNSIPVTGRTPATEYIDCSRDKKEKCIDSIPPFDGVLDCLSLDIHMQPWSRNNKSFNRPIIIWLGEVAGELWRLVAGGLIVIRANYRRGCYGFLCHHDQSLPYRNQGVNDVLHAIDWTIENARHFAGDISKITLAGHGASASLVEYIRLNHGHHLPLDKYIVMSANNFGSRDLYCSSNSNVMVTTARLLGMPPSPATESGKERSVYESVRYLSFVEPKLVMSKLYGLKAAFHPCPLSVNNRRASTFGIGFKTKNHTSSNCIRTANEQPVLFTNTLNEYHNFVYGSTVFTHARSETILRTIGDMLSRHFIESRLAYANSSTEKLIQQVNGQYNVVDGEFVDYDAFIRLLTDFAFIMPTVKMNEFTTECGGNSYHYVFDFGNSTHGDDLKMLTSSANDTSLTHFQRQLADGLGFILSKFVRRGYPVKKQDGWCPSTGLVAQIMEMNTKDENVVVKKSTEGVLIPLLNQSYVLHFHRVSVAKQKCYNRLGNVPFWNDLLKFHQSARRGWRDGDTGCARSKYLSEIV.

The helical transmembrane segment at 9–29 threads the bilayer; it reads VLSLTLIYISISIGFSVYFYV. Asn-71, Asn-89, Asn-101, Asn-185, Asn-386, Asn-449, and Asn-512 each carry an N-linked (GlcNAc...) asparagine; by host glycan. His-515 acts as the Charge relay system in catalysis. 2 N-linked (GlcNAc...) asparagine; by host glycosylation sites follow: Asn-527 and Asn-597.

The protein belongs to the type-B carboxylesterase/lipase family.

It is found in the membrane. The enzyme catalyses a carboxylic ester + H2O = an alcohol + a carboxylate + H(+). In Noctuidae (owlet moths), this protein is Putative esterase.